Here is a 332-residue protein sequence, read N- to C-terminus: ADP-L-glycero-D-manno-heptose-6-epimerase (332 aa).

NADP(+) contacts are provided by residues 13–14 (FI), 34–35 (DN), lysine 41, lysine 56, 78–82 (EGACS), and asparagine 95. Tyrosine 142 functions as the Proton acceptor in the catalytic mechanism. Lysine 146 contacts NADP(+). Asparagine 171 is a substrate binding site. NADP(+) is bound by residues valine 172 and lysine 180. Lysine 180 (proton acceptor) is an active-site residue. Residues arginine 182, histidine 189, 203–206 (FEGC), arginine 216, and tyrosine 295 each bind substrate.

The protein belongs to the NAD(P)-dependent epimerase/dehydratase family. HldD subfamily. In terms of assembly, homopentamer. NADP(+) serves as cofactor.

It catalyses the reaction ADP-D-glycero-beta-D-manno-heptose = ADP-L-glycero-beta-D-manno-heptose. Its pathway is nucleotide-sugar biosynthesis; ADP-L-glycero-beta-D-manno-heptose biosynthesis; ADP-L-glycero-beta-D-manno-heptose from D-glycero-beta-D-manno-heptose 7-phosphate: step 4/4. In terms of biological role, catalyzes the interconversion between ADP-D-glycero-beta-D-manno-heptose and ADP-L-glycero-beta-D-manno-heptose via an epimerization at carbon 6 of the heptose. This chain is ADP-L-glycero-D-manno-heptose-6-epimerase, found in Thiobacillus denitrificans (strain ATCC 25259 / T1).